A 727-amino-acid polypeptide reads, in one-letter code: Putative E3 ubiquitin-protein ligase UNKL (727 aa).

The interval 1 to 21 (MPSVSKAAAAALSGSPPQTEK) is disordered. 4 C3H1-type zinc fingers span residues 75–104 (YSPDIYCSKYDEATGLCPDGDECPYLHRTT), 115–145 (YYKTGTCIHETDARGHCVKNGLHCAFAHGPL), 243–277 (QYRSTPCPSVKHGDEWGEPSRCDGGDSCQYCHSRT), and 285–313 (IYKSTKCNDMRQTGYCPRGPFCAFAHTEK). A compositionally biased stretch (polar residues) spans 330 to 339 (STSAYSSQPG). Disordered regions lie at residues 330 to 360 (STSAYSSQPGSAKRKDSPSEGSQKATEDSKQ), 446 to 514 (LTGP…ATLG), and 543 to 562 (SPSPILNSGPSASSSASPNS). A compositionally biased stretch (low complexity) spans 463–495 (SLPRSPSLHSSSSLSTSPLSSLSQSLSGPLVSS). The RING-type zinc finger occupies 686 to 721 (CVACQERAHGTVLRPCQHRVLCEPCAASTPECPYCK).

This sequence belongs to the unkempt family. In terms of assembly, interacts with the GTP-bound form of Rac1. Interacts with Baf60b/Smarcd2. Ubiquitination is enhanced by activated Rac1. The presence of the RING finger domain is not essential for ubiquitination to occur. In terms of tissue distribution, ubiquitous.

The protein localises to the cytoplasm. The protein resides in the nucleus. It functions in the pathway protein modification; protein ubiquitination. Its function is as follows. May participate in a protein complex showing an E3 ligase activity regulated by Rac1. Ubiquitination is directed towards itself and possibly other substrates, such as Baf60b/Smarcd2. Intrinsic E3 ligase activity has not been proven. This chain is Putative E3 ubiquitin-protein ligase UNKL (Unkl), found in Mus musculus (Mouse).